A 519-amino-acid chain; its full sequence is T-complex protein 11-like protein 2 (519 aa).

A disordered region spans residues 1–30 (MPFNGEKQCVGEDQPSDSDSSRFSESMASL). A Phosphoserine modification is found at Ser-16. The segment covering 17-29 (DSDSSRFSESMAS) has biased composition (low complexity).

The protein belongs to the TCP11 family. As to quaternary structure, interacts with FMNL2; this interaction promotes muscle-derived satellite cell (MDSC) migration and differentiation.

The protein localises to the cytoplasm. It localises to the cytoskeleton. In terms of biological role, promotes the migration of muscle-derived satellite cells (MDSCs) during differentiation throught interaction with FMNL2 and therefore may participate in microfilament assembly. The chain is T-complex protein 11-like protein 2 from Homo sapiens (Human).